The primary structure comprises 137 residues: MNFKYIVAVSILIASAYARREENNIQSLSQRDVLEEESLREIRGIGASILSAGKSALKGFAKGLAEHFANGKRTAEDHEMMKRLEAAVRDLDSLEHPEEASEKETRGFNQEEKEKRIIGPVLGLVGSALGGLLKKIG.

Residues 1 to 18 (MNFKYIVAVSILIASAYA) form the signal peptide. Asn70 carries the post-translational modification Asparagine amide. The disordered stretch occupies residues 92–112 (DSLEHPEEASEKETRGFNQEE). Isoleucine amide is present on Ile136.

The protein belongs to the bombinin family. In terms of tissue distribution, expressed by the skin glands.

The protein localises to the secreted. Its function is as follows. Bombinin-like peptide 2 has antimicrobial activity, but no hemolytic activity. Preliminary evidence indicates that this peptide does not lyse and thus kill the bacteria by its antimicrobial activity. Functionally, bombinin H2 has antibacterial and hemolytic activity. This Bombina variegata (Yellow-bellied toad) protein is Bombinin-like peptides 2.